Consider the following 445-residue polypeptide: Phosphatidate cytidylyltransferase 2 (445 aa).

A compositionally biased stretch (basic and acidic residues) spans 1-39 (MTELRQRVAREPEAPPEDKESESEAKADGETASDSESRV). The tract at residues 1 to 52 (MTELRQRVAREPEAPPEDKESESEAKADGETASDSESRVEAVTQPPSADDTP) is disordered. Phosphoserine is present on serine 21. A Phosphothreonine modification is found at threonine 31. Residues serine 33, serine 35, and serine 37 each carry the phosphoserine modification. Threonine 51 carries the phosphothreonine modification. 6 helical membrane-spanning segments follow: residues 79–99 (MIAFFFIIIYLGPMVLMMIVM), 132–152 (FLLCVNYFFYGETVTDYFFTL), 166–186 (HRFISFTLYLTGFCMFVLSLV), 213–233 (LVIHNLFEGMIWFIVPISCVI), 262–282 (GFIGGFFATVVFGLLLSYVMS), and 340–360 (IALSTFASLIGPFGGFFASGF).

The protein belongs to the CDS family. In terms of assembly, homodimer.

The protein localises to the endoplasmic reticulum membrane. It carries out the reaction a 1,2-diacyl-sn-glycero-3-phosphate + CTP + H(+) = a CDP-1,2-diacyl-sn-glycerol + diphosphate. The catalysed reaction is 1-octadecanoyl-2-(5Z,8Z,11Z,14Z-eicosatetraenoyl)-sn-glycero-3-phosphate + CTP + H(+) = 1-octadecanoyl-2-(5Z,8Z,11Z,14Z-eicosatetraenoyl)-sn-glycero-3-cytidine-5'-diphosphate + diphosphate. It catalyses the reaction 1-octadecanoyl-2-(9Z,12Z-octadecadienoyl)-sn-glycero-3-phosphate + CTP + H(+) = 1-octadecanoyl-2-(9Z,12Z-octadecadienoyl)-sn-glycero-3-cytidine-5'-diphosphate + diphosphate. The enzyme catalyses 1-hexadecanoyl-2-(5Z,8Z,11Z,14Z-eicosatetraenoyl)-sn-glycero-3-phosphate + CTP + H(+) = 1-hexadecanoyl-2-(5Z,8Z,11Z,14Z-eicosatetraenoyl)-sn-glycero-3-cytidine-5'-diphosphate + diphosphate. It carries out the reaction 1,2-di-(5Z,8Z,11Z,14Z)-eicosatetraenoyl-sn-glycero-3-phosphate + CTP + H(+) = 1,2-di-(5Z,8Z,11Z,14Z-eicosatetraenoyl)-sn-glycero-3-cytidine-5'-diphosphate + diphosphate. The catalysed reaction is 1-octadecanoyl-2-(9Z-octadecenoyl)-sn-glycero-3-phosphate + CTP + H(+) = 1-octadecanoyl-2-(9Z-octadecenoyl)-sn-glycero-3-cytidine-5'-diphosphate + diphosphate. It catalyses the reaction 1-octadecanoyl-2-(4Z,7Z,10Z,13Z,16Z,19Z-docosahexaenoyl)-sn-glycero-3-phosphate + CTP + H(+) = 1-octadecanoyl-2-(4Z,7Z,10Z,13Z,16Z,19Z-docosahexaenoyl)-sn-glycero-3-cytidine-5'-diphosphate + diphosphate. The enzyme catalyses 1,2-di-(9Z,12Z-octadecadienoyl)-sn-glycero-3-phosphate + CTP + H(+) = 1,2-di-(9Z,12Z-octadecadienoyl)-sn-glycero-3-cytidine-5'-diphosphate + diphosphate. It carries out the reaction 1,2-di-(9Z-octadecenoyl)-sn-glycero-3-phosphate + CTP + H(+) = 1,2-di-(9Z-octadecenoyl)-sn-glycero-3-cytidine-5'-diphosphate + diphosphate. The protein operates within phospholipid metabolism; CDP-diacylglycerol biosynthesis; CDP-diacylglycerol from sn-glycerol 3-phosphate: step 3/3. Catalyzes the conversion of phosphatidic acid (PA) to CDP-diacylglycerol (CDP-DAG), an essential intermediate in the synthesis of phosphatidylglycerol, cardiolipin and phosphatidylinositol. Exhibits specificity for the nature of the acyl chains at the sn-1 and sn-2 positions in the substrate, PA and the preferred acyl chain composition is 1-stearoyl-2-arachidonoyl-sn-phosphatidic acid. Plays an important role in regulating the growth and maturation of lipid droplets which are storage organelles at the center of lipid and energy homeostasis. This is Phosphatidate cytidylyltransferase 2 (CDS2) from Bos taurus (Bovine).